Consider the following 416-residue polypeptide: Pentraxin fusion protein (416 aa).

The first 14 residues, 1 to 14 (MKSLLLFLKSQVFG), serve as a signal peptide directing secretion. N129 carries N-linked (GlcNAc...) asparagine glycosylation. The disordered stretch occupies residues 184–206 (GTEASDSSESVDGTEAPASPESD). The region spanning 220-416 (TNKSFMFPKE…YSMIGNVAEV (197 aa)) is the Pentraxin (PTX) domain. N221 is a glycosylation site (N-linked (GlcNAc...) asparagine). C251 and C311 are joined by a disulfide. 4 residues coordinate Ca(2+): D275, Q353, D354, and Q364.

Ca(2+) serves as cofactor.

The chain is Pentraxin fusion protein (pxn1) from Xenopus laevis (African clawed frog).